The following is a 211-amino-acid chain: Uridine kinase (211 aa).

An ATP-binding site is contributed by 12–19 (GGTGSGKT).

This sequence belongs to the uridine kinase family.

The protein localises to the cytoplasm. It carries out the reaction uridine + ATP = UMP + ADP + H(+). It catalyses the reaction cytidine + ATP = CMP + ADP + H(+). It functions in the pathway pyrimidine metabolism; CTP biosynthesis via salvage pathway; CTP from cytidine: step 1/3. Its pathway is pyrimidine metabolism; UMP biosynthesis via salvage pathway; UMP from uridine: step 1/1. The chain is Uridine kinase from Halalkalibacterium halodurans (strain ATCC BAA-125 / DSM 18197 / FERM 7344 / JCM 9153 / C-125) (Bacillus halodurans).